The primary structure comprises 121 residues: NAD(P)H-quinone oxidoreductase subunit M (121 aa).

The protein belongs to the complex I NdhM subunit family. As to quaternary structure, NDH-1 can be composed of about 15 different subunits; different subcomplexes with different compositions have been identified which probably have different functions.

The protein localises to the cellular thylakoid membrane. The catalysed reaction is a plastoquinone + NADH + (n+1) H(+)(in) = a plastoquinol + NAD(+) + n H(+)(out). It carries out the reaction a plastoquinone + NADPH + (n+1) H(+)(in) = a plastoquinol + NADP(+) + n H(+)(out). Functionally, NDH-1 shuttles electrons from an unknown electron donor, via FMN and iron-sulfur (Fe-S) centers, to quinones in the respiratory and/or the photosynthetic chain. The immediate electron acceptor for the enzyme in this species is believed to be plastoquinone. Couples the redox reaction to proton translocation, and thus conserves the redox energy in a proton gradient. Cyanobacterial NDH-1 also plays a role in inorganic carbon-concentration. The protein is NAD(P)H-quinone oxidoreductase subunit M of Nostoc punctiforme (strain ATCC 29133 / PCC 73102).